A 117-amino-acid polypeptide reads, in one-letter code: Basic phospholipase A2 pseudexin B chain (117 aa).

7 cysteine pairs are disulfide-bonded: Cys-11–Cys-71, Cys-27–Cys-117, Cys-29–Cys-45, Cys-44–Cys-98, Cys-51–Cys-91, Cys-60–Cys-84, and Cys-78–Cys-89. Residues Tyr-28, Gly-30, and Gly-32 each coordinate Ca(2+). His-48 is an active-site residue. Asp-49 contributes to the Ca(2+) binding site. Asp-92 is a catalytic residue.

Belongs to the phospholipase A2 family. Group I subfamily. D49 sub-subfamily. Ca(2+) serves as cofactor. As to expression, expressed by the venom gland.

Its subcellular location is the secreted. The enzyme catalyses a 1,2-diacyl-sn-glycero-3-phosphocholine + H2O = a 1-acyl-sn-glycero-3-phosphocholine + a fatty acid + H(+). PLA2 catalyzes the calcium-dependent hydrolysis of the 2-acyl groups in 3-sn-phosphoglycerides. This is Basic phospholipase A2 pseudexin B chain from Pseudechis porphyriacus (Red-bellied black snake).